The primary structure comprises 358 residues: Peptide chain release factor 1 (358 aa).

Gln232 bears the N5-methylglutamine mark.

This sequence belongs to the prokaryotic/mitochondrial release factor family. Methylated by PrmC. Methylation increases the termination efficiency of RF1.

The protein resides in the cytoplasm. Peptide chain release factor 1 directs the termination of translation in response to the peptide chain termination codons UAG and UAA. The chain is Peptide chain release factor 1 from Acidobacterium capsulatum (strain ATCC 51196 / DSM 11244 / BCRC 80197 / JCM 7670 / NBRC 15755 / NCIMB 13165 / 161).